The following is a 207-amino-acid chain: Guanylate kinase (207 aa).

Residues 4–184 (GILFIISAPS…AVNDLITIIT (181 aa)) enclose the Guanylate kinase-like domain. 11–18 (APSGTGKS) contacts ATP.

This sequence belongs to the guanylate kinase family.

The protein localises to the cytoplasm. The enzyme catalyses GMP + ATP = GDP + ADP. Its function is as follows. Essential for recycling GMP and indirectly, cGMP. The sequence is that of Guanylate kinase (gmk) from Buchnera aphidicola subsp. Acyrthosiphon pisum (strain APS) (Acyrthosiphon pisum symbiotic bacterium).